The following is a 584-amino-acid chain: Methionine--tRNA ligase (584 aa).

The short motif at 12 to 22 is the 'HIGH' region element; the sequence is PYANGDLHLGH. Residues Cys144, Cys147, Cys157, and Cys160 each contribute to the Zn(2+) site. The short motif at 334-338 is the 'KMSKS' region element; the sequence is QFSTS. Thr337 is an ATP binding site. Residues 541–563 are disordered; it reads EGRDRWAPSELEAGRPLPPPQPL.

The protein belongs to the class-I aminoacyl-tRNA synthetase family. MetG type 1 subfamily. In terms of assembly, monomer. Zn(2+) serves as cofactor.

Its subcellular location is the cytoplasm. It catalyses the reaction tRNA(Met) + L-methionine + ATP = L-methionyl-tRNA(Met) + AMP + diphosphate. In terms of biological role, is required not only for elongation of protein synthesis but also for the initiation of all mRNA translation through initiator tRNA(fMet) aminoacylation. The polypeptide is Methionine--tRNA ligase (Thermomicrobium roseum (strain ATCC 27502 / DSM 5159 / P-2)).